A 135-amino-acid chain; its full sequence is Ribonuclease P protein component (135 aa).

It belongs to the RnpA family. Consists of a catalytic RNA component (M1 or rnpB) and a protein subunit.

The enzyme catalyses Endonucleolytic cleavage of RNA, removing 5'-extranucleotides from tRNA precursor.. RNaseP catalyzes the removal of the 5'-leader sequence from pre-tRNA to produce the mature 5'-terminus. It can also cleave other RNA substrates such as 4.5S RNA. The protein component plays an auxiliary but essential role in vivo by binding to the 5'-leader sequence and broadening the substrate specificity of the ribozyme. The sequence is that of Ribonuclease P protein component from Pseudomonas paraeruginosa (strain DSM 24068 / PA7) (Pseudomonas aeruginosa (strain PA7)).